A 565-amino-acid polypeptide reads, in one-letter code: Phosphoenolpyruvate-protein phosphotransferase (565 aa).

His-191 (tele-phosphohistidine intermediate) is an active-site residue. Residues Arg-289 and Arg-325 each coordinate phosphoenolpyruvate. Mg(2+) contacts are provided by Glu-427 and Asp-451. Residues 450–451 (ND) and Arg-461 contribute to the phosphoenolpyruvate site. The active-site Proton donor is Cys-498.

This sequence belongs to the PEP-utilizing enzyme family. In terms of assembly, homodimer. It depends on Mg(2+) as a cofactor.

The protein resides in the cytoplasm. The enzyme catalyses L-histidyl-[protein] + phosphoenolpyruvate = N(pros)-phospho-L-histidyl-[protein] + pyruvate. General (non sugar-specific) component of the phosphoenolpyruvate-dependent sugar phosphotransferase system (sugar PTS). This major carbohydrate active-transport system catalyzes the phosphorylation of incoming sugar substrates concomitantly with their translocation across the cell membrane. Enzyme I transfers the phosphoryl group from phosphoenolpyruvate (PEP) to the phosphoryl carrier protein (HPr). The polypeptide is Phosphoenolpyruvate-protein phosphotransferase (ptsI) (Haloferax volcanii (strain ATCC 29605 / DSM 3757 / JCM 8879 / NBRC 14742 / NCIMB 2012 / VKM B-1768 / DS2) (Halobacterium volcanii)).